A 96-amino-acid chain; its full sequence is Putative pterin-4-alpha-carbinolamine dehydratase (96 aa).

It belongs to the pterin-4-alpha-carbinolamine dehydratase family.

It carries out the reaction (4aS,6R)-4a-hydroxy-L-erythro-5,6,7,8-tetrahydrobiopterin = (6R)-L-erythro-6,7-dihydrobiopterin + H2O. The sequence is that of Putative pterin-4-alpha-carbinolamine dehydratase from Brucella anthropi (strain ATCC 49188 / DSM 6882 / CCUG 24695 / JCM 21032 / LMG 3331 / NBRC 15819 / NCTC 12168 / Alc 37) (Ochrobactrum anthropi).